A 62-amino-acid polypeptide reads, in one-letter code: Sucrase-isomaltase, intestinal (62 aa).

The Cytoplasmic portion of the chain corresponds to 2-12 (ARKKFSGLEIX). Serine 7 carries the phosphoserine; by PKA modification. Residues 13–32 (LIVLFAIVLSIAIALVVVXA) form a helical; Signal-anchor for type II membrane protein membrane-spanning segment. At 33–38 (SKXPAV) the chain is on the lumenal side. Tyrosine 59 is modified (sulfotyrosine).

It belongs to the glycosyl hydrolase 31 family. As to quaternary structure, the resulting sucrase and isomaltase subunits stay associated with one another in a complex by non-covalent linkages. In terms of processing, the precursor is proteolytically cleaved when exposed to pancreatic proteases in the intestinal lumen. Sulfated.

The protein resides in the apical cell membrane. The catalysed reaction is Hydrolysis of sucrose and maltose by an alpha-D-glucosidase-type action.. It carries out the reaction Hydrolysis of (1-&gt;6)-alpha-D-glucosidic linkages in some oligosaccharides produced from starch and glycogen by alpha-amylase, and in isomaltose.. Functionally, plays an important role in the final stage of carbohydrate digestion. Isomaltase activity is specific for both alpha-1,4- and alpha-1,6-oligosaccharides. In Sus scrofa (Pig), this protein is Sucrase-isomaltase, intestinal (SI).